The primary structure comprises 61 residues: Small ribosomal subunit protein uS14 (61 aa).

The Zn(2+) site is built by Cys24, Cys27, Cys40, and Cys43.

This sequence belongs to the universal ribosomal protein uS14 family. Zinc-binding uS14 subfamily. Part of the 30S ribosomal subunit. Contacts proteins S3 and S10. It depends on Zn(2+) as a cofactor.

Its function is as follows. Binds 16S rRNA, required for the assembly of 30S particles and may also be responsible for determining the conformation of the 16S rRNA at the A site. The polypeptide is Small ribosomal subunit protein uS14 (Thermosipho melanesiensis (strain DSM 12029 / CIP 104789 / BI429)).